Consider the following 487-residue polypeptide: Protein nucleotidyltransferase YdiU (487 aa).

8 residues coordinate ATP: Gly-90, Gly-92, Arg-93, Lys-113, Asp-125, Gly-126, Arg-176, and Arg-183. The active-site Proton acceptor is the Asp-252. 2 residues coordinate Mg(2+): Asn-253 and Asp-262. Asp-262 contacts ATP.

This sequence belongs to the SELO family. It depends on Mg(2+) as a cofactor. The cofactor is Mn(2+).

The catalysed reaction is L-seryl-[protein] + ATP = 3-O-(5'-adenylyl)-L-seryl-[protein] + diphosphate. The enzyme catalyses L-threonyl-[protein] + ATP = 3-O-(5'-adenylyl)-L-threonyl-[protein] + diphosphate. It carries out the reaction L-tyrosyl-[protein] + ATP = O-(5'-adenylyl)-L-tyrosyl-[protein] + diphosphate. It catalyses the reaction L-histidyl-[protein] + UTP = N(tele)-(5'-uridylyl)-L-histidyl-[protein] + diphosphate. The catalysed reaction is L-seryl-[protein] + UTP = O-(5'-uridylyl)-L-seryl-[protein] + diphosphate. The enzyme catalyses L-tyrosyl-[protein] + UTP = O-(5'-uridylyl)-L-tyrosyl-[protein] + diphosphate. Nucleotidyltransferase involved in the post-translational modification of proteins. It can catalyze the addition of adenosine monophosphate (AMP) or uridine monophosphate (UMP) to a protein, resulting in modifications known as AMPylation and UMPylation. This chain is Protein nucleotidyltransferase YdiU, found in Pseudomonas savastanoi pv. phaseolicola (strain 1448A / Race 6) (Pseudomonas syringae pv. phaseolicola (strain 1448A / Race 6)).